An 81-amino-acid chain; its full sequence is Putative defensin-like protein 26 (81 aa).

Residues 1-21 (MASLKVFSFALLIVLTFSVIG) form the signal peptide. Cystine bridges form between Cys33/Cys81 and Cys52/Cys77.

This sequence belongs to the DEFL family.

It localises to the secreted. This chain is Putative defensin-like protein 26, found in Arabidopsis thaliana (Mouse-ear cress).